Consider the following 646-residue polypeptide: UvrABC system protein C (646 aa).

The region spanning 16–95 (VEPGVYRFRD…IKEFDPRFNV (80 aa)) is the GIY-YIG domain. Positions 208 to 243 (DRFARALEQQMNAAAEQLDFERAARLRDDLSALKRA) constitute a UVR domain.

Belongs to the UvrC family. As to quaternary structure, interacts with UvrB in an incision complex.

The protein localises to the cytoplasm. In terms of biological role, the UvrABC repair system catalyzes the recognition and processing of DNA lesions. UvrC both incises the 5' and 3' sides of the lesion. The N-terminal half is responsible for the 3' incision and the C-terminal half is responsible for the 5' incision. In Mycobacterium bovis (strain BCG / Pasteur 1173P2), this protein is UvrABC system protein C.